Here is a 354-residue protein sequence, read N- to C-terminus: Neuronal growth regulator 1 (354 aa).

The first 37 residues, 1–37, serve as a signal peptide directing secretion; it reads MDMMLLVQGACCSNQWLAAVLLSLCCLLPSCLPAGQS. 3 consecutive Ig-like C2-type domains span residues 38-134, 139-221, and 225-313; these read VDFP…VHLT, PKIY…KVVV, and PTIQ…LPLN. Residues Cys-60 and Cys-118 are joined by a disulfide bond. N-linked (GlcNAc...) asparagine glycosylation is found at Asn-73 and Asn-155. Disulfide bonds link Cys-160-Cys-203 and Cys-245-Cys-297. A Phosphotyrosine modification is found at Tyr-187. Asn-275, Asn-286, Asn-294, and Asn-307 each carry an N-linked (GlcNAc...) asparagine glycan. Residue Gly-324 is the site of GPI-anchor amidated glycine attachment. Positions 325-354 are cleaved as a propeptide — removed in mature form; the sequence is SADVLFSCWYLVLTLSSFTSIFYLKNAILQ.

It belongs to the immunoglobulin superfamily. IgLON family.

The protein resides in the cell membrane. May be involved in cell-adhesion. May function as a trans-neural growth-promoting factor in regenerative axon sprouting in the mammalian brain. This is Neuronal growth regulator 1 (NEGR1) from Homo sapiens (Human).